Here is a 618-residue protein sequence, read N- to C-terminus: Vacuolar-sorting receptor 5 (618 aa).

A signal peptide spans 1-23; sequence MSPSNKGTVLALILALTMVVVNG. Residues 24 to 563 lie on the Lumenal side of the membrane; the sequence is FSSRFFVEKS…IERRSGSRSR (540 aa). The 107-residue stretch at 58–164 folds into the PA domain; sequence KYGGFMIGSV…SFGDSLKKAL (107 aa). N-linked (GlcNAc...) asparagine glycosylation is found at asparagine 81, asparagine 293, and asparagine 430. 2 EGF-like domains span residues 412–462 and 465–511; these read ETNE…TSCK and GPAR…LKCE. 7 disulfides stabilise this stretch: cysteine 416–cysteine 434, cysteine 423–cysteine 443, cysteine 445–cysteine 461, cysteine 469–cysteine 489, cysteine 476–cysteine 497, cysteine 499–cysteine 510, and cysteine 540–cysteine 553. The EGF-like 3; calcium-binding domain maps to 512–554; that stretch reads DIDECKEKSACKCDGCKCKNNWGGYECKCSNNSIYMKEEDTCI. Asparagine 542 carries an N-linked (GlcNAc...) asparagine glycan. A helical transmembrane segment spans residues 564–584; it reads GLFTIVVLTAIAGISLGAYIF. The Cytoplasmic portion of the chain corresponds to 585-618; sequence YKYHLQSYMDSEIVSIMSQYIPLDSQSINQDSFK. Positions 604-607 match the Tyrosine-based internalization motif motif; that stretch reads YIPL.

Belongs to the VSR (BP-80) family. In terms of tissue distribution, expressed in seedlings, roots, leaves, flowers and siliques.

The protein localises to the membrane. The protein resides in the golgi apparatus membrane. It is found in the cytoplasmic vesicle. Its subcellular location is the clathrin-coated vesicle membrane. It localises to the prevacuolar compartment membrane. In terms of biological role, vacuolar-sorting receptor (VSR) involved in clathrin-coated vesicles sorting from Golgi apparatus to vacuoles. The sequence is that of Vacuolar-sorting receptor 5 (VSR5) from Arabidopsis thaliana (Mouse-ear cress).